The primary structure comprises 123 residues: Large ribosomal subunit protein bL19c (123 aa).

The protein belongs to the bacterial ribosomal protein bL19 family.

It is found in the plastid. It localises to the chloroplast. This chain is Large ribosomal subunit protein bL19c (rpl19), found in Porphyra purpurea (Red seaweed).